A 430-amino-acid chain; its full sequence is Enolase (430 aa).

Residue Gln163 participates in (2R)-2-phosphoglycerate binding. Catalysis depends on Glu205, which acts as the Proton donor. Mg(2+) contacts are provided by Asp242, Glu287, and Asp314. 4 residues coordinate (2R)-2-phosphoglycerate: Lys339, Arg368, Ser369, and Lys390. The Proton acceptor role is filled by Lys339.

Belongs to the enolase family. It depends on Mg(2+) as a cofactor.

It localises to the cytoplasm. The protein resides in the secreted. Its subcellular location is the cell surface. It carries out the reaction (2R)-2-phosphoglycerate = phosphoenolpyruvate + H2O. Its pathway is carbohydrate degradation; glycolysis; pyruvate from D-glyceraldehyde 3-phosphate: step 4/5. Its function is as follows. Catalyzes the reversible conversion of 2-phosphoglycerate (2-PG) into phosphoenolpyruvate (PEP). It is essential for the degradation of carbohydrates via glycolysis. The polypeptide is Enolase (Geobacillus kaustophilus (strain HTA426)).